Consider the following 518-residue polypeptide: Putative transposase for insertion sequence IS408 (518 aa).

The region spanning 11-94 (LKEVLRLKWA…PDYTALHREL (84 aa)) is the HTH IS408-type domain. A DNA-binding region (H-T-H motif) is located at residues 23-44 (LTHRQISRAIGISVGAVSKFAA). Positions 140 to 335 (QQHRAGEKLF…LPVRRYEIAT (196 aa)) constitute an Integrase catalytic domain. The tract at residues 496–518 (LPTTPAEWRSPEHENVRGPDYYH) is disordered. Basic and acidic residues predominate over residues 504-518 (RSPEHENVRGPDYYH).

Belongs to the transposase IS21/IS408/IS1162 family.

Required for the transposition of the insertion element. This is Putative transposase for insertion sequence IS408 from Burkholderia multivorans (strain ATCC 17616 / 249).